A 126-amino-acid chain; its full sequence is NADP-reducing hydrogenase subunit HndB (126 aa).

In terms of assembly, heterotetramer composed of HndA, HndB, HndC and HndD subunits. HndA and HndB could form a heterodimeric intermediate in the electron transfer between the active site of hydrogenase subunit HndD and the NADP reduction site of the reducing subunit HndC.

It carries out the reaction H2 + NADP(+) = NADPH + H(+). With respect to regulation, inhibited by oxygen. Its function is as follows. Catalyzes the reduction of NADP in the presence of molecular H2 to yield NADPH. In Solidesulfovibrio fructosivorans (Desulfovibrio fructosivorans), this protein is NADP-reducing hydrogenase subunit HndB (hndB).